A 625-amino-acid chain; its full sequence is DELLA protein SLR1 (625 aa).

Residues 1 to 34 (MKREYQEAGGSSGGGSSADMGSCKDKVMAGAAGE) are disordered. The short motif at 39 to 43 (DELLA) is the DELLA motif element. Residues 167-208 (TADPSAADSARDTKRMRTGGGSTSSSSSSSSSLGGGASRGSV) form a disordered region. Residues 189-198 (TSSSSSSSSS) show a composition bias toward low complexity. A GRAS domain is found at 232-621 (VDTQEAGIRL…RPLIATSAWR (390 aa)). The interval 239-294 (IRLVHALLACAEAVQQENFAAAEALVKQIPTLAASQGGAMRKVAAYFGEALARRVY) is leucine repeat I (LRI). Positions 241 to 278 (LVHALLACAEAVQQENFAAAEALVKQIPTLAASQGGAM) are required for possible homodimerization. The short motif at 246–250 (LACAE) is the LxCxE motif element. The tract at residues 313-378 (HAHFYESCPY…GGPPSFRLTG (66 aa)) is VHIID. The VHIID motif lies at 344-348 (VHVVD). Residues 392-431 (QVGWKLAQFAHTIRVDFQYRGLVAATLADLEPFMLQPEGE) are leucine repeat II (LRII). Residues 441 to 542 (IAVNSVFELH…EVYLGRQICN (102 aa)) are PFYRE. The short motif at 449–453 (LHRLL) is the LXXLL motif element. Positions 545 to 621 (ACEGAERTER…RPLIATSAWR (77 aa)) are SAW.

It belongs to the GRAS family. DELLA subfamily.

Functionally, probable transcriptional regulator that acts as a repressor of the gibberellin (GA) signaling pathway. Probably acts by participating in large multiprotein complexes that repress transcription of GA-inducible genes. Upon GA application, it is degraded by the proteasome, allowing the GA signaling pathway. In contrast, its overexpression prevents the GA signaling pathway and induces a dwarf phenotype. The protein is DELLA protein SLR1 of Oryza sativa subsp. indica (Rice).